The primary structure comprises 508 residues: MVSINIRPDEIGSIIRKQIEEYIQEVKVVNIGTVLQVGDGIARIYGLDEVMAGELLEFEDGTVGIALNLESDNVGAVLMGDGLTIQEGGSVKATGKIAQIPVSNAYLGRVVNALAQPIDGKGQISASESRLIESPAPGIISRRSVYEPMQTGLIAIDSMIPIGRGQRELIIGDRQTGKTAVATDTILNQKGQNVTCVYVAIGQKASSVAQVVNTFQERGAMEYTIVVAEMADSPATLQYLAPYTGAALAEYFMYRKQHTLIIYDDLSKQAQAYRQMSLLLRRPPGREAYPGDVFYLHSRLLERAAKLSSQLGEGSMTALPIVETQAGDVSAYIPTNVISITDGQIFLSADLFNAGIRPAINVGISVSRVGSAAQIKAMKQVAGKLKLELAQFAELEAFAQFASDLDRATQNQLARGQRLRELLKQSQSAPLSVEEQVATIYTGVNGYLDILKVEQVKRFLVQLREYLVTNKPQFGEIIRSTKIFTEDAESILRVAIREYTELFLLQEK.

Residue 172–179 coordinates ATP; it reads GDRQTGKT.

The protein belongs to the ATPase alpha/beta chains family. F-type ATPases have 2 components, CF(1) - the catalytic core - and CF(0) - the membrane proton channel. CF(1) has five subunits: alpha(3), beta(3), gamma(1), delta(1), epsilon(1). CF(0) has four main subunits: a, b, b' and c.

Its subcellular location is the plastid. It localises to the chloroplast thylakoid membrane. It carries out the reaction ATP + H2O + 4 H(+)(in) = ADP + phosphate + 5 H(+)(out). Functionally, produces ATP from ADP in the presence of a proton gradient across the membrane. The alpha chain is a regulatory subunit. This Psilotum nudum (Whisk fern) protein is ATP synthase subunit alpha, chloroplastic.